Reading from the N-terminus, the 33-residue chain is AYTTEQCRALNGTCRFYACFPKNVVIGKCDWLG.

The protein belongs to the beta-defensin family. Helofensin subfamily. Expressed by the venom gland.

Its subcellular location is the secreted. Its function is as follows. Lethal toxin which possesses an inhibitory effect on direct electrical stimulation of the isolated hemi-diaphragm. Neither hemorrhagic nor hemolytic activities are detected. Phospholipase A2 activity, proteolytic activity and arginine esterolytic activity are absent. The sequence is that of Helofensin-1 from Heloderma horridum horridum (Mexican beaded lizard).